The following is a 297-amino-acid chain: Tyrosine recombinase XerD (297 aa).

The region spanning 1-86 (MKDSALIELF…AMRKLFQYLY (86 aa)) is the Core-binding (CB) domain. Residues 107–291 (RLPKYLTEQQ…AKERLKHLHE (185 aa)) enclose the Tyr recombinase domain. Residues Arg-147, Lys-171, His-243, Arg-246, and His-269 contribute to the active site. The active-site O-(3'-phospho-DNA)-tyrosine intermediate is the Tyr-278.

The protein belongs to the 'phage' integrase family. XerD subfamily. In terms of assembly, forms a cyclic heterotetrameric complex composed of two molecules of XerC and two molecules of XerD.

It localises to the cytoplasm. Functionally, site-specific tyrosine recombinase, which acts by catalyzing the cutting and rejoining of the recombining DNA molecules. The XerC-XerD complex is essential to convert dimers of the bacterial chromosome into monomers to permit their segregation at cell division. It also contributes to the segregational stability of plasmids. The polypeptide is Tyrosine recombinase XerD (Pasteurella multocida (strain Pm70)).